Here is a 313-residue protein sequence, read N- to C-terminus: MEIANTQAAIPTIDISALLSPTASEQSRQTVINNMSDACHAYGFFNLVGHDIPPEAMRDALDCNKLFFALPQDRKMEVSIDKSIGRSFRGYEPPGIQTHHEGLLPDTKETFMVGREVMEGDPDCGSFSTGPNLWPSDLHKKGFQDRVMSYQARMLRLVETILDCLALGLPKSWNCTSHVFKPLLNKPSIPMRFLHYGPVEIHDDRQFGVADHTDFGFVSILLQEAGTSGLEVFYPPTKSWVPVPVFEQGFVINMGDMMQKHRHSVAFFLNGDLKLNAKALDGSGHETIVGEQIQQRLIETMGMTGNLLRRELV.

Positions 187–284 (PSIPMRFLHY…LNAKALDGSG (98 aa)) constitute a Fe2OG dioxygenase domain. Fe cation contacts are provided by His212, Asp214, and His263. Lys274 contributes to the 2-oxoglutarate binding site.

This sequence belongs to the iron/ascorbate-dependent oxidoreductase family. The cofactor is Fe(2+).

Its pathway is secondary metabolite biosynthesis; terpenoid biosynthesis. 2-oxoglutarate-dependent dioxygenase; part of the gene cluster that mediates the biosynthesis of eupenifeldin, a bistropolone meroterpenoid that acts as an antitumor agent. The first step of eupenifeldin biosynthesis is the biosynthesis of 3-methylorcinaldehyde performed by the non-reducing polyketide synthase eupA. Oxidative dearomatization of 3-methylorcinaldehyde likely catalyzed by the FAD-dependent monooxygenase eupB is followed by oxidative ring expansion by the 2-oxoglutarate-dependent dioxygenase eupC to provide the first tropolone metabolite, tropolone stipitaldehyde. In parallel, generation of sesquiterpene alpha-humulene from farnesylpyrophosphate (FPP) is catalyzed by the terpene cyclase eupE. The cytochrome P450 monooxygenase eupD then hydroxylates humulene to humulenol. The putative Diels-Alderase eupF probably catalyzes the formation of the tropolone-humulene skeleton by linking humulenol and the polyketide moiety. The short-chain dehydrogenase/reductase eupG and the flavin-dependent monooxygenase eupH are also essential for eupenifeldin biosynthesis and are likely the additional decorating enzymes of the tropolone-humulene skeleton to produce final eupenifeldin or derivatives. This is 2-oxoglutarate-dependent dioxygenase eupC from Phoma sp.